The chain runs to 410 residues: S-adenosylmethionine synthase (410 aa).

Residue histidine 21 coordinates ATP. Aspartate 23 is a Mg(2+) binding site. Position 49 (glutamate 49) interacts with K(+). Positions 62 and 105 each coordinate L-methionine. The tract at residues 105-115 (QSQEIGAGVDQ) is flexible loop. The interval 107–133 (QEIGAGVDQSHEVRSGENTDADDQAGA) is disordered. Residues 180–182 (DGK), aspartate 261, 267–268 (RK), alanine 284, and lysine 288 each bind ATP. Aspartate 261 contributes to the L-methionine binding site. Position 292 (lysine 292) interacts with L-methionine.

The protein belongs to the AdoMet synthase family. As to quaternary structure, homotetramer; dimer of dimers. It depends on Mg(2+) as a cofactor. Requires K(+) as cofactor.

The protein localises to the cytoplasm. The catalysed reaction is L-methionine + ATP + H2O = S-adenosyl-L-methionine + phosphate + diphosphate. Its pathway is amino-acid biosynthesis; S-adenosyl-L-methionine biosynthesis; S-adenosyl-L-methionine from L-methionine: step 1/1. Catalyzes the formation of S-adenosylmethionine (AdoMet) from methionine and ATP. The overall synthetic reaction is composed of two sequential steps, AdoMet formation and the subsequent tripolyphosphate hydrolysis which occurs prior to release of AdoMet from the enzyme. The chain is S-adenosylmethionine synthase from Corynebacterium diphtheriae (strain ATCC 700971 / NCTC 13129 / Biotype gravis).